Consider the following 141-residue polypeptide: Large ribosomal subunit protein uL11 (141 aa).

It belongs to the universal ribosomal protein uL11 family. In terms of assembly, part of the ribosomal stalk of the 50S ribosomal subunit. Interacts with L10 and the large rRNA to form the base of the stalk. L10 forms an elongated spine to which L12 dimers bind in a sequential fashion forming a multimeric L10(L12)X complex. One or more lysine residues are methylated.

Its function is as follows. Forms part of the ribosomal stalk which helps the ribosome interact with GTP-bound translation factors. This Prochlorococcus marinus (strain SARG / CCMP1375 / SS120) protein is Large ribosomal subunit protein uL11.